The primary structure comprises 300 residues: tRNA dimethylallyltransferase 1 (300 aa).

Position 13–20 (13–20 (GPTGVGKT)) interacts with ATP. Position 15 to 20 (15 to 20 (TGVGKT)) interacts with substrate. Residues 38-41 (DSRQ) are interaction with substrate tRNA.

Belongs to the IPP transferase family. Monomer. Mg(2+) is required as a cofactor.

It catalyses the reaction adenosine(37) in tRNA + dimethylallyl diphosphate = N(6)-dimethylallyladenosine(37) in tRNA + diphosphate. Catalyzes the transfer of a dimethylallyl group onto the adenine at position 37 in tRNAs that read codons beginning with uridine, leading to the formation of N6-(dimethylallyl)adenosine (i(6)A). The chain is tRNA dimethylallyltransferase 1 from Porphyromonas gingivalis (strain ATCC BAA-308 / W83).